Consider the following 503-residue polypeptide: Inosine-5'-monophosphate dehydrogenase 1 (503 aa).

The residue at position 2 (serine 2) is an N-acetylserine. In terms of domain architecture, CBS spans 167-225 (MKSCDSSDYCVPWEIDFEKLEFVLEDKQKGFVVLERDGETVNVVTKDDIQRVKGYPKSG). NAD(+) contacts are provided by residues 265-267 (DSS) and 315-317 (GMG). Positions 317 and 319 each coordinate K(+). Serine 320 is a binding site for IMP. Position 322 (cysteine 322) interacts with K(+). Residue cysteine 322 is the Thioimidate intermediate of the active site. IMP contacts are provided by residues 355–357 (DGG), 378–379 (GS), and 402–406 (YRGMG). Arginine 418 acts as the Proton acceptor in catalysis. Glutamine 430 contributes to the IMP binding site. Positions 489, 490, and 491 each coordinate K(+).

The protein belongs to the IMPDH/GMPR family. Homotetramer. K(+) is required as a cofactor.

The protein resides in the cytoplasm. The catalysed reaction is IMP + NAD(+) + H2O = XMP + NADH + H(+). The protein operates within purine metabolism; XMP biosynthesis via de novo pathway; XMP from IMP: step 1/1. Mycophenolic acid (MPA) is a non-competitive inhibitor that prevents formation of the closed enzyme conformation by binding to the same site as the amobile flap. In contrast, mizoribine monophosphate (MZP) is a competitive inhibitor that induces the closed conformation. MPA is a potent inhibitor of mammalian IMPDHs but a poor inhibitor of the bacterial enzymes. MZP is a more potent inhibitor of bacterial IMPDH. Its function is as follows. Catalyzes the conversion of inosine 5'-phosphate (IMP) to xanthosine 5'-phosphate (XMP), the first committed and rate-limiting step in the de novo synthesis of guanine nucleotides, and therefore plays an important role in the regulation of cell growth. The chain is Inosine-5'-monophosphate dehydrogenase 1 from Arabidopsis thaliana (Mouse-ear cress).